Consider the following 191-residue polypeptide: Guanylate kinase (191 aa).

Positions 4-182 constitute a Guanylate kinase-like domain; sequence GRLIVVSGPS…AREEMIEIMR (179 aa). An ATP-binding site is contributed by 11-18; that stretch reads GPSGAGKS.

Belongs to the guanylate kinase family.

Its subcellular location is the cytoplasm. It carries out the reaction GMP + ATP = GDP + ADP. In terms of biological role, essential for recycling GMP and indirectly, cGMP. The protein is Guanylate kinase of Rubrobacter xylanophilus (strain DSM 9941 / JCM 11954 / NBRC 16129 / PRD-1).